We begin with the raw amino-acid sequence, 358 residues long: Phospho-N-acetylmuramoyl-pentapeptide-transferase (358 aa).

Transmembrane regions (helical) follow at residues leucine 27–alanine 47, methionine 81–leucine 101, leucine 106–leucine 126, valine 147–isoleucine 167, serine 171–isoleucine 191, leucine 201–leucine 221, leucine 228–tyrosine 248, isoleucine 255–leucine 275, serine 278–isoleucine 298, and isoleucine 336–isoleucine 356.

This sequence belongs to the glycosyltransferase 4 family. MraY subfamily. It depends on Mg(2+) as a cofactor.

It is found in the cell inner membrane. It carries out the reaction UDP-N-acetyl-alpha-D-muramoyl-L-alanyl-gamma-D-glutamyl-meso-2,6-diaminopimeloyl-D-alanyl-D-alanine + di-trans,octa-cis-undecaprenyl phosphate = di-trans,octa-cis-undecaprenyl diphospho-N-acetyl-alpha-D-muramoyl-L-alanyl-D-glutamyl-meso-2,6-diaminopimeloyl-D-alanyl-D-alanine + UMP. It participates in cell wall biogenesis; peptidoglycan biosynthesis. Functionally, catalyzes the initial step of the lipid cycle reactions in the biosynthesis of the cell wall peptidoglycan: transfers peptidoglycan precursor phospho-MurNAc-pentapeptide from UDP-MurNAc-pentapeptide onto the lipid carrier undecaprenyl phosphate, yielding undecaprenyl-pyrophosphoryl-MurNAc-pentapeptide, known as lipid I. The sequence is that of Phospho-N-acetylmuramoyl-pentapeptide-transferase from Prochlorococcus marinus (strain MIT 9215).